Here is an 85-residue protein sequence, read N- to C-terminus: Conotoxin Lt28.7 (85 aa).

A signal peptide spans M1–A21. Positions V22–E40 are excised as a propeptide.

The protein belongs to the conotoxin D superfamily. In terms of processing, contains 5 disulfide bonds. As to expression, expressed by the venom duct.

The protein localises to the secreted. Probable neurotoxin. In Conus litteratus (Lettered cone), this protein is Conotoxin Lt28.7.